We begin with the raw amino-acid sequence, 350 residues long: Kievitone hydratase (350 aa).

The signal sequence occupies residues 1-19 (MMISSVLVAGVVAVSAALA).

Homodimer. Glycosylated.

It localises to the secreted. The catalysed reaction is kievitone hydrate = kievitone + H2O. Its function is as follows. Converts fungitoxic kievitone to the less toxic kievitone hydrate, and thereby protects the pathogenic fungus against this phytoalexin. This Fusarium solani subsp. phaseoli (Nectria haematococca) protein is Kievitone hydratase (khs).